The following is a 274-amino-acid chain: MASPSSSSSLCSTFASPRAASLGRRLAFSSPRKAFRVRASSRVDKFSKNDIIVSPSILSANFSKLGEQVKAVEVAGCDWIHVDVMDGRFVPNITIGPLVVDALRPVTDLPLDVHLMIVEPEQRVPDFIKAGADIVSVHCEQSSTIHLHRTVNQIKSLGAKAGVVLNPATPLTAIDYVLDVVDLVLIMSVNPGFGGQSFIESQVKKIAELRRLCAEKGVNPWIEVDGGVGPKNAYKVIEAGANAIVAGSAVFGAPDYAEAIKGIKTSQKPVAVPA.

The N-terminal 39 residues, 1 to 39, are a transit peptide targeting the chloroplast; the sequence is MASPSSSSSLCSTFASPRAASLGRRLAFSSPRKAFRVRA. Substrate is bound at residue S56. Residues H81, D83, and H114 each contribute to the a divalent metal cation site. D83 acts as the Proton acceptor in catalysis. Residues H114, 192–195, 225–227, and 247–248 each bind substrate; these read GFGG, DGG, and GS. D225 contacts a divalent metal cation. The Proton donor role is filled by D225.

It belongs to the ribulose-phosphate 3-epimerase family. In terms of assembly, homooctamer. It depends on Co(2+) as a cofactor. Fe(2+) is required as a cofactor. The cofactor is Mn(2+). Zn(2+) serves as cofactor.

Its subcellular location is the plastid. It is found in the chloroplast thylakoid membrane. It carries out the reaction D-ribulose 5-phosphate = D-xylulose 5-phosphate. The protein operates within carbohydrate biosynthesis; Calvin cycle. In terms of biological role, catalyzes the reversible epimerization of D-ribulose 5-phosphate to D-xylulose 5-phosphate. In Oryza sativa subsp. japonica (Rice), this protein is Ribulose-phosphate 3-epimerase, chloroplastic (RPE).